A 269-amino-acid polypeptide reads, in one-letter code: Chymotrypsin-like elastase family member 2A (269 aa).

A signal peptide spans 1 to 16 (MIRALLLSTLVAGALS). Positions 17–28 (CGVPTYPPQLSR) are cleaved as a propeptide — activation peptide. One can recognise a Peptidase S1 domain in the interval 29–267 (VVGGEDARPN…YNDWISSVIE (239 aa)). Cys58 and Cys74 are joined by a disulfide. Residues His73 and Asp121 each act as charge relay system in the active site. 3 disulfides stabilise this stretch: Cys155/Cys222, Cys186/Cys202, and Cys212/Cys243. Ser216 (charge relay system) is an active-site residue.

Belongs to the peptidase S1 family. Elastase subfamily. In terms of assembly, interacts with CPA1. Interacts with SERPINA1. In terms of tissue distribution, pancreas.

The protein localises to the secreted. The catalysed reaction is Preferential cleavage: Leu-|-Xaa, Met-|-Xaa and Phe-|-Xaa. Hydrolyzes elastin.. In terms of biological role, elastase that enhances insulin signaling and might have a physiologic role in cellular glucose metabolism. Circulates in plasma and reduces platelet hyperactivation, triggers both insulin secretion and degradation, and increases insulin sensitivity. The sequence is that of Chymotrypsin-like elastase family member 2A (CELA2A) from Bos taurus (Bovine).